The sequence spans 359 residues: Squamosa promoter-binding-like protein 13A (359 aa).

Positions 75-94 (AKPEGSRSSSSKRTRGNGVG) are disordered. The segment at 98-175 (MPICLVDGCD…DGHNRRRRKP (78 aa)) adopts an SBP-type zinc-finger fold. Zn(2+) contacts are provided by Cys-101, Cys-106, Cys-123, His-126, Cys-142, Cys-145, His-149, and Cys-161. Positions 158-174 (KRSCRKRLDGHNRRRRK) match the Bipartite nuclear localization signal motif.

Requires Zn(2+) as cofactor.

It is found in the nucleus. Trans-acting factor that binds specifically to the consensus nucleotide sequence 5'-TNCGTACAA-3'. The sequence is that of Squamosa promoter-binding-like protein 13A (SPL13A) from Arabidopsis thaliana (Mouse-ear cress).